Reading from the N-terminus, the 166-residue chain is Protein SprT (166 aa).

The SprT-like domain maps to 19-164 (REHLAKANLK…CVHCGDLLVA (146 aa)). H78 provides a ligand contact to Zn(2+). E79 is a catalytic residue. Residue H82 participates in Zn(2+) binding.

This sequence belongs to the SprT family. Zn(2+) is required as a cofactor.

The protein resides in the cytoplasm. In Klebsiella pneumoniae (strain 342), this protein is Protein SprT.